A 360-amino-acid polypeptide reads, in one-letter code: UDP-D-xylose:L-fucose alpha-1,3-D-xylosyltransferase MGP4 (360 aa).

The disordered stretch occupies residues 1-25 (MAQQKFLHQRPIQNPFTNPFSSSPL). Residues 1–41 (MAQQKFLHQRPIQNPFTNPFSSSPLSTSSISNRPISLLSRN) lie on the Cytoplasmic side of the membrane. A compositionally biased stretch (low complexity) spans 14 to 25 (NPFTNPFSSSPL). The helical; Signal-anchor for type II membrane protein transmembrane segment at 42 to 62 (GLLLLLALLVILGVFLPWAGS) threads the bilayer. Over 63–360 (PLFPSPNKLS…ASESPLGKLE (298 aa)) the chain is Lumenal. 2 N-linked (GlcNAc...) asparagine glycosylation sites follow: Asn-93 and Asn-168. The DXD motif motif lies at 191–193 (DVD). N-linked (GlcNAc...) asparagine glycans are attached at residues Asn-285 and Asn-310.

It belongs to the glycosyltransferase 77 family. Requires Mn(2+) as cofactor. Mg(2+) is required as a cofactor. As to expression, widely expressed.

It is found in the golgi apparatus membrane. Functionally, catalyzes the transfer of D-xylose from UDP-alpha-D-xylose onto L-fucose. Probably involved in the biosynthesis of rhamnogalacturonan II (RG-II) through xylosylation of the internal fucose moiety of the A-chain of RG-II, a structurally complex pectic polysaccharide of the primary cell wall. RG-II is essential for the cell wall integrity of rapidly growing tissues such as roots and pollen tube growth and elongation. In Arabidopsis thaliana (Mouse-ear cress), this protein is UDP-D-xylose:L-fucose alpha-1,3-D-xylosyltransferase MGP4.